Reading from the N-terminus, the 148-residue chain is Large ribosomal subunit protein bL9 (148 aa).

This sequence belongs to the bacterial ribosomal protein bL9 family.

In terms of biological role, binds to the 23S rRNA. This chain is Large ribosomal subunit protein bL9, found in Bacillus thuringiensis subsp. konkukian (strain 97-27).